Consider the following 154-residue polypeptide: Small ribosomal subunit protein bS6 (154 aa).

The tract at residues Asp97–Gly154 is disordered. Basic and acidic residues-rich tracts occupy residues Gln105 to Glu124 and Asp135 to Gly154.

Belongs to the bacterial ribosomal protein bS6 family.

Its function is as follows. Binds together with bS18 to 16S ribosomal RNA. The protein is Small ribosomal subunit protein bS6 of Methylobacterium radiotolerans (strain ATCC 27329 / DSM 1819 / JCM 2831 / NBRC 15690 / NCIMB 10815 / 0-1).